The chain runs to 461 residues: Ornithine decarboxylase (461 aa).

Position 69 is an N6-(pyridoxal phosphate)lysine (Lys-69). Pyridoxal 5'-phosphate contacts are provided by residues Ser-200, Gly-237, and 274 to 277 (EPGR). Residue Ser-303 is modified to Phosphoserine; by CK2. 331 to 332 (YD) is a substrate binding site. The Proton donor; shared with dimeric partner role is filled by Cys-360. Cys-360 is subject to S-nitrosocysteine. Asp-361 contributes to the substrate binding site. Tyr-389 provides a ligand contact to pyridoxal 5'-phosphate.

It belongs to the Orn/Lys/Arg decarboxylase class-II family. In terms of assembly, homodimer. Only the dimer is catalytically active, as the active sites are constructed of residues from both monomers. Pyridoxal 5'-phosphate is required as a cofactor.

The enzyme catalyses L-ornithine + H(+) = putrescine + CO2. It participates in amine and polyamine biosynthesis; putrescine biosynthesis via L-ornithine pathway; putrescine from L-ornithine: step 1/1. Inhibited by antizymes (AZs) OAZ1, OAZ2 and OAZ3 in response to polyamine levels. AZs inhibit the assembly of the functional homodimer by binding to ODC monomers. Additionally, OAZ1 targets ODC monomers for ubiquitin-independent proteolytic destruction by the 26S proteasome. Catalyzes the first and rate-limiting step of polyamine biosynthesis that converts ornithine into putrescine, which is the precursor for the polyamines, spermidine and spermine. Polyamines are essential for cell proliferation and are implicated in cellular processes, ranging from DNA replication to apoptosis. The chain is Ornithine decarboxylase (Odc1) from Mus pahari (Gairdner's shrew-mouse).